The sequence spans 581 residues: Probable peptidoglycan D,D-transpeptidase PenA (581 aa).

Residues 28–48 (ISFVLMAIAVLFAGLIARGLY) traverse the membrane as a helical segment. The active-site Acyl-ester intermediate is serine 310.

It belongs to the transpeptidase family. FtsI subfamily.

It is found in the cell inner membrane. The enzyme catalyses Preferential cleavage: (Ac)2-L-Lys-D-Ala-|-D-Ala. Also transpeptidation of peptidyl-alanyl moieties that are N-acyl substituents of D-alanine.. It functions in the pathway cell wall biogenesis; peptidoglycan biosynthesis. Its function is as follows. Catalyzes cross-linking of the peptidoglycan cell wall at the division septum. In Neisseria meningitidis serogroup A / serotype 4A (strain DSM 15465 / Z2491), this protein is Probable peptidoglycan D,D-transpeptidase PenA.